The primary structure comprises 289 residues: 3-methyl-2-oxobutanoate hydroxymethyltransferase (289 aa).

Asp-58 and Asp-99 together coordinate Mg(2+). 3-methyl-2-oxobutanoate-binding positions include 58 to 59, Asp-99, and Lys-128; that span reads DS. Glu-130 serves as a coordination point for Mg(2+). Glu-197 functions as the Proton acceptor in the catalytic mechanism.

This sequence belongs to the PanB family. Homodecamer; pentamer of dimers. Requires Mg(2+) as cofactor.

The protein resides in the cytoplasm. The catalysed reaction is 3-methyl-2-oxobutanoate + (6R)-5,10-methylene-5,6,7,8-tetrahydrofolate + H2O = 2-dehydropantoate + (6S)-5,6,7,8-tetrahydrofolate. Its pathway is cofactor biosynthesis; (R)-pantothenate biosynthesis; (R)-pantoate from 3-methyl-2-oxobutanoate: step 1/2. Catalyzes the reversible reaction in which hydroxymethyl group from 5,10-methylenetetrahydrofolate is transferred onto alpha-ketoisovalerate to form ketopantoate. This Leptothrix cholodnii (strain ATCC 51168 / LMG 8142 / SP-6) (Leptothrix discophora (strain SP-6)) protein is 3-methyl-2-oxobutanoate hydroxymethyltransferase.